Consider the following 310-residue polypeptide: Aspartate carbamoyltransferase catalytic subunit (310 aa).

Carbamoyl phosphate contacts are provided by R60 and T61. Residue K88 participates in L-aspartate binding. Carbamoyl phosphate-binding residues include R110, H138, and Q141. 2 residues coordinate L-aspartate: R171 and R225. Residues G266 and P267 each contribute to the carbamoyl phosphate site.

The protein belongs to the aspartate/ornithine carbamoyltransferase superfamily. ATCase family. As to quaternary structure, heterododecamer (2C3:3R2) of six catalytic PyrB chains organized as two trimers (C3), and six regulatory PyrI chains organized as three dimers (R2).

It catalyses the reaction carbamoyl phosphate + L-aspartate = N-carbamoyl-L-aspartate + phosphate + H(+). It functions in the pathway pyrimidine metabolism; UMP biosynthesis via de novo pathway; (S)-dihydroorotate from bicarbonate: step 2/3. Catalyzes the condensation of carbamoyl phosphate and aspartate to form carbamoyl aspartate and inorganic phosphate, the committed step in the de novo pyrimidine nucleotide biosynthesis pathway. The polypeptide is Aspartate carbamoyltransferase catalytic subunit (Christiangramia forsetii (strain DSM 17595 / CGMCC 1.15422 / KT0803) (Gramella forsetii)).